Reading from the N-terminus, the 762-residue chain is MGRIGKKAMAIALVSAVMVTPLNVCATVENQEQQQVTQGAEDIAVIDDAQETVAADEAQADEAAAITVEGRETAEESSASIPEGILMEKNNVDIAEGQGYSLDQEAGAKYVKAMTQGTIILSYKSTSENGIQSLFSVGNSTAGNQDRHFHIYITNSGGIGIELRNTDGVFNYTLDRPASVRALYKGERVFNTVALKADAANKQCRLFANGELLATLDKDAFKFISDITGVDNVTLGGTKRQGKIAYPFGGTIGDIKVYSNALSDEELIQATGVTTYGENIFYAGDVTESNYFRIPSLLTLSTGTVISAADARYGGTHDSKSKINIAFAKSTDGGNTWSEPTLPLKFDDYIAKNIDWPRDSVGKNVQIQGSASYIDPVLLEDKLTKRIFLFADLMPAGIGSSNASVGSGFKEVNGKKYLKLRWHKDAGRAYDYTIREKGVIYNDATNQPTEFRVDGEYNLYQHDTNLTCKQYDYNFSGNNLIESKTDVDVNMNIFYKNSVFKAFPTNYLAMRYSDDEGASWSDLDIVSSFKPEVSKFLVVGPGIGKQISTGENAGRLLVPLYSKSSAELGFMYSDDHGDNWTYVEADNLTGGATAEAQIVEMPDGSLKTYLRTGSNCIAEVTSIDGGETWSDRVPLQGISTTSYGTQLSVINYSQPIDGKPAIILSSPNATNGRKNGKIWIGLVNDTGNTGIDKYSVEWKYSYAVDTPQMGYSYSCLAELPDGQVGLLYEKYDSWSRNELHLKDILKFEKYSISELTGQASGN.

A signal peptide spans 1–27 (MGRIGKKAMAIALVSAVMVTPLNVCAT). Arginine 293 lines the substrate pocket. Residue aspartate 318 is the Proton acceptor of the active site. BNR repeat units follow at residues 328–339 (AKSTDGGNTWSE), 511–522 (RYSDDEGASWSD), and 571–582 (MYSDDHGDNWTY). Glutamate 595 is an active-site residue. Arginine 611 is a binding site for substrate. Residues 620–631 (VTSIDGGETWSD) form a BNR 4 repeat. Arginine 673 serves as a coordination point for substrate. The active-site Nucleophile is the tyrosine 713.

It belongs to the glycosyl hydrolase 33 family.

Its subcellular location is the secreted. The protein resides in the extracellular space. The catalysed reaction is Elimination of alpha-sialyl groups in N-acetylneuraminic acid glycosides, releasing 2,7-anhydro-alpha-N-acetylneuraminate.. The polypeptide is Anhydrosialidase (Macrobdella decora (North American leech)).